Consider the following 275-residue polypeptide: 2-dehydro-3-deoxyphosphooctonate aldolase (275 aa).

It belongs to the KdsA family.

Its subcellular location is the cytoplasm. The enzyme catalyses D-arabinose 5-phosphate + phosphoenolpyruvate + H2O = 3-deoxy-alpha-D-manno-2-octulosonate-8-phosphate + phosphate. Its pathway is carbohydrate biosynthesis; 3-deoxy-D-manno-octulosonate biosynthesis; 3-deoxy-D-manno-octulosonate from D-ribulose 5-phosphate: step 2/3. The protein operates within bacterial outer membrane biogenesis; lipopolysaccharide biosynthesis. The protein is 2-dehydro-3-deoxyphosphooctonate aldolase of Francisella tularensis subsp. holarctica (strain LVS).